A 707-amino-acid polypeptide reads, in one-letter code: Transcription factor 12 (707 aa).

Positions 25 to 109 (AMFSPPVNSG…TPFMNSNLIG (85 aa)) are disordered. Composition is skewed to polar residues over residues 30-48 (PVNS…QFSG) and 56-76 (GTTS…SRGF). A phosphoserine mark is found at S47, S67, and S79. Basic and acidic residues predominate over residues 81–93 (HYSDHLNDSRLGT). S98 is modified (phosphoserine). K110 is covalently cross-linked (Glycyl lysine isopeptide (Lys-Gly) (interchain with G-Cter in SUMO2)). Phosphoserine is present on residues S116 and S124. A leucine-zipper region spans residues 119–140 (LYSRDSGLSGCQSSLLRQDLGL). 2 disordered regions span residues 140–222 (LGSP…SMFA) and 249–313 (FGGI…ASHT). Residues 144-163 (AQLSSSGKPGTPYYSFSATS) are compositionally biased toward polar residues. Residue K181 forms a Glycyl lysine isopeptide (Lys-Gly) (interchain with G-Cter in SUMO2) linkage. A compositionally biased stretch (low complexity) spans 256-269 (STSHMSQSSSYGSL). Polar residues predominate over residues 282-306 (VSPTDINTSLPPMSSFHRGSTSSSP). T313 is modified (phosphothreonine). Residue S333 is modified to Phosphoserine. 2 disordered regions span residues 349 to 393 (PDHT…YENS) and 521 to 605 (HKTP…ERRM). Residues 352-363 (TSSSFPSNPSTP) are compositionally biased toward low complexity. Polar residues-rich tracts occupy residues 364-377 (VGSP…TSQW) and 384-393 (APSSPSYENS). 2 stretches are compositionally biased toward basic and acidic residues: residues 543–555 (IKTE…ENLH) and 561–576 (DDMK…DIKV). K544 participates in a covalent cross-link: Glycyl lysine isopeptide (Lys-Gly) (interchain with G-Cter in SUMO2). S565 carries the phosphoserine modification. A Glycyl lysine isopeptide (Lys-Gly) (interchain with G-Cter in SUMO2) cross-link involves residue K575. At T582 the chain carries Phosphothreonine. A phosphoserine mark is found at S583 and S584. Residues 593–605 (PEQKIEREKERRM) show a composition bias toward basic and acidic residues. Residues 602–655 (ERRMANNARERLRVRDINEAFKELGRMCQLHLKSEKPQTKLLILHQAVAVILSL) form the bHLH domain. Glycyl lysine isopeptide (Lys-Gly) (interchain with G-Cter in SUMO2) cross-links involve residues K634 and K678. Residues 657–680 (QQVRERNLNPKAACLKRREEEKVS) form a class A specific domain region. The tract at residues 675-707 (EEEKVSAASAEPPTTLPGTHPGLSETTNPMGHL) is disordered. The segment covering 686-697 (PPTTLPGTHPGL) has biased composition (low complexity). A compositionally biased stretch (polar residues) spans 698 to 707 (SETTNPMGHL).

As to quaternary structure, efficient DNA binding requires dimerization with another bHLH protein. Forms homo- or heterooligomers with myogenin, E12 and ITF2 proteins. Interacts with PTF1. Interacts with RUNX1T1. Interacts with NEUROD2. Interacts with BHLHA9. Isoform gamma is highly expressed in lung, kidney, spleen, and is expressed at reduced levels in heart, muscle, liver, pituitary, brain and the trigeminal ganglion. The expression of isoform alpha predominates over isoform gamma in the pituitary and the brain.

The protein resides in the nucleus. Its function is as follows. Transcriptional regulator. Involved in the initiation of neuronal differentiation. Activates transcription by binding to the E box (5'-CANNTG-3'). May be involved in the functional network that regulates the development of the GnRH axis. The sequence is that of Transcription factor 12 (Tcf12) from Rattus norvegicus (Rat).